The chain runs to 430 residues: tRNA(Ile)-lysidine synthase (430 aa).

An ATP-binding site is contributed by 21-26 (SGGLDS).

It belongs to the tRNA(Ile)-lysidine synthase family.

Its subcellular location is the cytoplasm. The enzyme catalyses cytidine(34) in tRNA(Ile2) + L-lysine + ATP = lysidine(34) in tRNA(Ile2) + AMP + diphosphate + H(+). In terms of biological role, ligates lysine onto the cytidine present at position 34 of the AUA codon-specific tRNA(Ile) that contains the anticodon CAU, in an ATP-dependent manner. Cytidine is converted to lysidine, thus changing the amino acid specificity of the tRNA from methionine to isoleucine. In Salmonella heidelberg (strain SL476), this protein is tRNA(Ile)-lysidine synthase.